A 347-amino-acid chain; its full sequence is NADH-ubiquinone oxidoreductase chain 2 (347 aa).

The next 10 helical transmembrane spans lie at 3–23 (PLALSLILTTLLAGTLITMMS), 25–45 (HWLTAWMGLEMNMLTMIPILM), 59–79 (YFMTQATASMMLMMALTINLM), 93–115 (VASNVALMALMTKLGSAPFHFWV), 150–170 (NTNLIYLSGLLSILIGGWGGL), 178–198 (ILAYSSISHMGWMLIILPFNP), 200–220 (LTLLNLAIYILLTLSIFMILA), 240–260 (MTIMLMTTLLSLGGLPPLSGF), 274–294 (NSIIMPLTMAIMTLLNMYFYM), and 326–346 (LPTLITLSNMLLPLTPMISML).

The protein belongs to the complex I subunit 2 family. Core subunit of respiratory chain NADH dehydrogenase (Complex I) which is composed of 45 different subunits. Interacts with TMEM242.

It is found in the mitochondrion inner membrane. The enzyme catalyses a ubiquinone + NADH + 5 H(+)(in) = a ubiquinol + NAD(+) + 4 H(+)(out). In terms of biological role, core subunit of the mitochondrial membrane respiratory chain NADH dehydrogenase (Complex I) which catalyzes electron transfer from NADH through the respiratory chain, using ubiquinone as an electron acceptor. Essential for the catalytic activity and assembly of complex I. In Mammuthus primigenius (Siberian woolly mammoth), this protein is NADH-ubiquinone oxidoreductase chain 2.